The chain runs to 261 residues: Cytochrome c oxidase subunit 3 (261 aa).

Topologically, residues 1–15 (MTHQTHAYHMVNPSP) are mitochondrial matrix. The chain crosses the membrane as a helical span at residues 16 to 34 (WPLTGALSALLMTSGLAMW). Residues 35-40 (FHYNLT) are Mitochondrial intermembrane-facing. Residues 41–66 (LLLTLGMTTNLLTMYQWWRDIIREST) traverse the membrane as a helical segment. The Mitochondrial matrix segment spans residues 67 to 72 (FQGHHT). The helical transmembrane segment at 73 to 105 (PIVQKGLRYGMILFIISEVFFFAGFFWAFYHSS) threads the bilayer. Over 106-128 (LAPTPELGGCWPPTGIIPLNPLE) the chain is Mitochondrial intermembrane. Residues 129 to 152 (VPLLNTSVLLASGVSITWAHHSLM) traverse the membrane as a helical segment. The Mitochondrial matrix segment spans residues 153 to 155 (EGN). Residues 156 to 183 (RKHMLQALFITISLGVYFTLLQASEYYE) form a helical membrane-spanning segment. Topologically, residues 184–190 (TSFTISD) are mitochondrial intermembrane. A helical membrane pass occupies residues 191–223 (GVYGSTFFMATGFHGLHVIIGSTFLIVCFLRQL). The Mitochondrial matrix segment spans residues 224 to 232 (KYHFTSNHH). A helical transmembrane segment spans residues 233-256 (FGFEAAAWYWHFVDVVWLFLYVSI). Residues 257–261 (YWWGS) are Mitochondrial intermembrane-facing.

It belongs to the cytochrome c oxidase subunit 3 family. As to quaternary structure, component of the cytochrome c oxidase (complex IV, CIV), a multisubunit enzyme composed of 14 subunits. The complex is composed of a catalytic core of 3 subunits MT-CO1, MT-CO2 and MT-CO3, encoded in the mitochondrial DNA, and 11 supernumerary subunits COX4I, COX5A, COX5B, COX6A, COX6B, COX6C, COX7A, COX7B, COX7C, COX8 and NDUFA4, which are encoded in the nuclear genome. The complex exists as a monomer or a dimer and forms supercomplexes (SCs) in the inner mitochondrial membrane with NADH-ubiquinone oxidoreductase (complex I, CI) and ubiquinol-cytochrome c oxidoreductase (cytochrome b-c1 complex, complex III, CIII), resulting in different assemblies (supercomplex SCI(1)III(2)IV(1) and megacomplex MCI(2)III(2)IV(2)).

The protein localises to the mitochondrion inner membrane. The enzyme catalyses 4 Fe(II)-[cytochrome c] + O2 + 8 H(+)(in) = 4 Fe(III)-[cytochrome c] + 2 H2O + 4 H(+)(out). Functionally, component of the cytochrome c oxidase, the last enzyme in the mitochondrial electron transport chain which drives oxidative phosphorylation. The respiratory chain contains 3 multisubunit complexes succinate dehydrogenase (complex II, CII), ubiquinol-cytochrome c oxidoreductase (cytochrome b-c1 complex, complex III, CIII) and cytochrome c oxidase (complex IV, CIV), that cooperate to transfer electrons derived from NADH and succinate to molecular oxygen, creating an electrochemical gradient over the inner membrane that drives transmembrane transport and the ATP synthase. Cytochrome c oxidase is the component of the respiratory chain that catalyzes the reduction of oxygen to water. Electrons originating from reduced cytochrome c in the intermembrane space (IMS) are transferred via the dinuclear copper A center (CU(A)) of subunit 2 and heme A of subunit 1 to the active site in subunit 1, a binuclear center (BNC) formed by heme A3 and copper B (CU(B)). The BNC reduces molecular oxygen to 2 water molecules using 4 electrons from cytochrome c in the IMS and 4 protons from the mitochondrial matrix. The sequence is that of Cytochrome c oxidase subunit 3 (MT-CO3) from Felis catus (Cat).